A 423-amino-acid chain; its full sequence is Serine--tRNA ligase (423 aa).

2 stretches are compositionally biased toward basic and acidic residues: residues 1-24 (MIDL…RGED) and 62-71 (KMRDASPEEK). Positions 1 to 71 (MIDLKQLRDD…KMRDASPEEK (71 aa)) are disordered. 230–232 (TSE) is an L-serine binding site. ATP-binding positions include 261–263 (RRE) and valine 277. Glutamate 284 lines the L-serine pocket. An ATP-binding site is contributed by 348-351 (ELTS). Threonine 383 is a binding site for L-serine.

Belongs to the class-II aminoacyl-tRNA synthetase family. Type-1 seryl-tRNA synthetase subfamily. In terms of assembly, homodimer. The tRNA molecule binds across the dimer.

The protein resides in the cytoplasm. It catalyses the reaction tRNA(Ser) + L-serine + ATP = L-seryl-tRNA(Ser) + AMP + diphosphate + H(+). The enzyme catalyses tRNA(Sec) + L-serine + ATP = L-seryl-tRNA(Sec) + AMP + diphosphate + H(+). It participates in aminoacyl-tRNA biosynthesis; selenocysteinyl-tRNA(Sec) biosynthesis; L-seryl-tRNA(Sec) from L-serine and tRNA(Sec): step 1/1. Its function is as follows. Catalyzes the attachment of serine to tRNA(Ser). Is also able to aminoacylate tRNA(Sec) with serine, to form the misacylated tRNA L-seryl-tRNA(Sec), which will be further converted into selenocysteinyl-tRNA(Sec). This chain is Serine--tRNA ligase, found in Corynebacterium kroppenstedtii (strain DSM 44385 / JCM 11950 / CIP 105744 / CCUG 35717).